The following is a 431-amino-acid chain: NADH-quinone oxidoreductase subunit D 2 (431 aa).

The segment at 1–37 is disordered; the sequence is MSEAKGVGGIDPRATPGSAGAGERPPMGTLSPRAGEG.

Belongs to the complex I 49 kDa subunit family. NDH-1 is composed of 14 different subunits. Subunits NuoB, C, D, E, F, and G constitute the peripheral sector of the complex.

It is found in the cell inner membrane. It catalyses the reaction a quinone + NADH + 5 H(+)(in) = a quinol + NAD(+) + 4 H(+)(out). Functionally, NDH-1 shuttles electrons from NADH, via FMN and iron-sulfur (Fe-S) centers, to quinones in the respiratory chain. The immediate electron acceptor for the enzyme in this species is believed to be ubiquinone. Couples the redox reaction to proton translocation (for every two electrons transferred, four hydrogen ions are translocated across the cytoplasmic membrane), and thus conserves the redox energy in a proton gradient. This is NADH-quinone oxidoreductase subunit D 2 from Anaeromyxobacter sp. (strain K).